The following is an 834-amino-acid chain: Periplasmic nitrate reductase (834 aa).

The segment at residues 1 to 29 (MSLTRRQFAKANAAAIAATVAGMPIASTA) is a signal peptide (tat-type signal). The 4Fe-4S Mo/W bis-MGD-type domain maps to 41 to 97 (LKWDKAPCRFCGTGCGVMVATRENRVVATHGDVKADVNRGINCVKGYFLSKIMYGTD). Cys-48, Cys-51, Cys-55, and Cys-83 together coordinate [4Fe-4S] cluster. Mo-bis(molybdopterin guanine dinucleotide)-binding positions include Lys-85, Gln-152, Asn-177, Cys-181, 214-221 (WGSNMAEM), 245-249 (STFEH), 264-266 (QTD), Met-375, Gln-379, Asn-485, 511-512 (SD), Lys-534, Asp-561, and 721-730 (TGRVLEHWHT). A substrate-binding site is contributed by Phe-797. Mo-bis(molybdopterin guanine dinucleotide) contacts are provided by Asn-805 and Lys-822.

This sequence belongs to the prokaryotic molybdopterin-containing oxidoreductase family. NasA/NapA/NarB subfamily. As to quaternary structure, component of the periplasmic nitrate reductase NapAB complex composed of NapA and NapB. The cofactor is [4Fe-4S] cluster. Mo-bis(molybdopterin guanine dinucleotide) is required as a cofactor. Predicted to be exported by the Tat system. The position of the signal peptide cleavage has not been experimentally proven.

It is found in the periplasm. It carries out the reaction 2 Fe(II)-[cytochrome] + nitrate + 2 H(+) = 2 Fe(III)-[cytochrome] + nitrite + H2O. Functionally, catalytic subunit of the periplasmic nitrate reductase complex NapAB. Receives electrons from NapB and catalyzes the reduction of nitrate to nitrite. This is Periplasmic nitrate reductase from Stutzerimonas stutzeri (Pseudomonas stutzeri).